The sequence spans 432 residues: MKFTLVATVLLTFSLSAFAVEYPVLTIASPDQVGFDSQKLHRLDGWIQNQIDAGYPSINLLVIKDNHIVLQKAWGYAKKYDGSTLLAHPIRATTNTMYDLASNTKMYATNFALQKLVYEGKIDVNDLVSKYIPGFKDMPGDKIKGKDKLRIIDILHHVAGFPADPQYPNKNVAGKLFSQSKSTTLEMIKKTPLEYQPRSKHIYSDVDYMILGFIIESITAMPLDRYVETTIYKPLGLKHTVFNPLMKGFTPPQIAATELHGNTRDGVIHFPNIRTNTLWGQVHDEKAWYSMGGVSGHAGLFSDTHDMAVLMQVMLNGGGYGNLKLFDDKTVAQFTRRSPEDATFGLGWRVNGNSSMTPTFGVLASPQTYGHTGWTGTLTSIDPVNHMAIVILGNRPHSPVANPKVNPNVFVSGLLPAATYGWIVDQIYGSLK.

Residues 7-25 traverse the membrane as a helical; Signal-anchor segment; that stretch reads ATVLLTFSLSAFAVEYPVL.

Belongs to the peptidase S12 family. YfeW subfamily.

The protein localises to the cell inner membrane. The catalysed reaction is Preferential cleavage: (Ac)2-L-Lys-D-Ala-|-D-Ala. Also transpeptidation of peptidyl-alanyl moieties that are N-acyl substituents of D-alanine.. In Salmonella gallinarum (strain 287/91 / NCTC 13346), this protein is Putative D-alanyl-D-alanine carboxypeptidase.